A 417-amino-acid chain; its full sequence is Phosphoribosylamine--glycine ligase (417 aa).

The 200-residue stretch at 108–307 (KRIMDEAGVP…LSTLLFAAAT (200 aa)) folds into the ATP-grasp domain. Residue 134 to 188 (LDEFGAPYVVKADGLAAGKGVIVTEDRAAALAHAARYLTHGSVLVEEFLDGEEVS) participates in ATP binding. The Mg(2+) site is built by Glu277 and Asn279.

The protein belongs to the GARS family. Mg(2+) serves as cofactor. Requires Mn(2+) as cofactor.

The catalysed reaction is 5-phospho-beta-D-ribosylamine + glycine + ATP = N(1)-(5-phospho-beta-D-ribosyl)glycinamide + ADP + phosphate + H(+). The protein operates within purine metabolism; IMP biosynthesis via de novo pathway; N(1)-(5-phospho-D-ribosyl)glycinamide from 5-phospho-alpha-D-ribose 1-diphosphate: step 2/2. The chain is Phosphoribosylamine--glycine ligase from Leifsonia xyli subsp. xyli (strain CTCB07).